A 238-amino-acid chain; its full sequence is 15,16-dihydrobiliverdin:ferredoxin oxidoreductase (238 aa).

The protein belongs to the HY2 family.

The enzyme catalyses 15,16-dihydrobiliverdin + oxidized 2[4Fe-4S]-[ferredoxin] = biliverdin IXalpha + reduced 2[4Fe-4S]-[ferredoxin] + 2 H(+). Catalyzes the two-electron reduction of biliverdin IX-alpha at the C15 methine bridge. This Prochlorococcus marinus (strain NATL1A) protein is 15,16-dihydrobiliverdin:ferredoxin oxidoreductase.